A 346-amino-acid polypeptide reads, in one-letter code: S-adenosylmethionine:tRNA ribosyltransferase-isomerase (346 aa).

This sequence belongs to the QueA family. In terms of assembly, monomer.

It localises to the cytoplasm. It carries out the reaction 7-aminomethyl-7-carbaguanosine(34) in tRNA + S-adenosyl-L-methionine = epoxyqueuosine(34) in tRNA + adenine + L-methionine + 2 H(+). The protein operates within tRNA modification; tRNA-queuosine biosynthesis. Transfers and isomerizes the ribose moiety from AdoMet to the 7-aminomethyl group of 7-deazaguanine (preQ1-tRNA) to give epoxyqueuosine (oQ-tRNA). This Neisseria gonorrhoeae (strain ATCC 700825 / FA 1090) protein is S-adenosylmethionine:tRNA ribosyltransferase-isomerase.